We begin with the raw amino-acid sequence, 330 residues long: tRNA (guanine-N(7)-)-methyltransferase (330 aa).

Residues Met1–Gly27 are disordered. The segment covering Lys7–Ala18 has biased composition (basic residues). S-adenosyl-L-methionine contacts are provided by residues Gly95 and Glu118 to Ile119. The disordered stretch occupies residues Gln138–Gln185. Residues Ser144–Thr162 show a composition bias toward low complexity. Over residues Thr172–Gln185 the composition is skewed to polar residues. S-adenosyl-L-methionine is bound by residues Asn193 to Thr194 and Cys213. Asp216 is an active-site residue. Thr302–Glu304 is an S-adenosyl-L-methionine binding site.

It belongs to the class I-like SAM-binding methyltransferase superfamily. TrmB family. Forms a complex with trm82.

It localises to the nucleus. It carries out the reaction guanosine(46) in tRNA + S-adenosyl-L-methionine = N(7)-methylguanosine(46) in tRNA + S-adenosyl-L-homocysteine. Its pathway is tRNA modification; N(7)-methylguanine-tRNA biosynthesis. In terms of biological role, catalyzes the formation of N(7)-methylguanine at position 46 (m7G46) in tRNA. This Aspergillus oryzae (strain ATCC 42149 / RIB 40) (Yellow koji mold) protein is tRNA (guanine-N(7)-)-methyltransferase (trm8).